We begin with the raw amino-acid sequence, 290 residues long: Phosphoribosylaminoimidazole-succinocarboxamide synthase (290 aa).

Belongs to the SAICAR synthetase family.

It carries out the reaction 5-amino-1-(5-phospho-D-ribosyl)imidazole-4-carboxylate + L-aspartate + ATP = (2S)-2-[5-amino-1-(5-phospho-beta-D-ribosyl)imidazole-4-carboxamido]succinate + ADP + phosphate + 2 H(+). It participates in purine metabolism; IMP biosynthesis via de novo pathway; 5-amino-1-(5-phospho-D-ribosyl)imidazole-4-carboxamide from 5-amino-1-(5-phospho-D-ribosyl)imidazole-4-carboxylate: step 1/2. The protein is Phosphoribosylaminoimidazole-succinocarboxamide synthase of Haemophilus influenzae (strain PittEE).